The primary structure comprises 304 residues: Probable solute-binding protein AdeT1 (304 aa).

It belongs to the bacterial solute-binding protein 7 family.

Its function is as follows. Mediates antimicrobial resistance via active efflux. Contributes to resistance to antibiotics such as chloramphenicol, erythromycin and novobiocin. May be part of a tripartite ATP-independent periplasmic (TRAP) transport system. The polypeptide is Probable solute-binding protein AdeT1 (Acinetobacter baumannii).